A 132-amino-acid chain; its full sequence is Large ribosomal subunit protein uL14 (132 aa).

The protein belongs to the universal ribosomal protein uL14 family. In terms of assembly, part of the 50S ribosomal subunit. Forms a cluster with proteins L3 and L24e, part of which may contact the 16S rRNA in 2 intersubunit bridges.

Binds to 23S rRNA. Forms part of two intersubunit bridges in the 70S ribosome. The chain is Large ribosomal subunit protein uL14 from Methanococcus vannielii.